Reading from the N-terminus, the 309-residue chain is Porphobilinogen deaminase (309 aa).

S-(dipyrrolylmethanemethyl)cysteine is present on C241.

Belongs to the HMBS family. In terms of assembly, monomer. Dipyrromethane serves as cofactor.

It catalyses the reaction 4 porphobilinogen + H2O = hydroxymethylbilane + 4 NH4(+). Its pathway is porphyrin-containing compound metabolism; protoporphyrin-IX biosynthesis; coproporphyrinogen-III from 5-aminolevulinate: step 2/4. Its function is as follows. Tetrapolymerization of the monopyrrole PBG into the hydroxymethylbilane pre-uroporphyrinogen in several discrete steps. The chain is Porphobilinogen deaminase from Bacillus cereus (strain AH187).